The primary structure comprises 173 residues: Regulatory protein RecX (173 aa).

It belongs to the RecX family.

The protein resides in the cytoplasm. Modulates RecA activity. In Mycobacterium avium (strain 104), this protein is Regulatory protein RecX.